We begin with the raw amino-acid sequence, 318 residues long: Oncosphere antigen A (318 aa).

3 Fibronectin type-III domains span residues 6 to 103 (IPQN…TPLP), 109 to 207 (KPSF…ISRA), and 211 to 308 (VPQN…TPSV).

The sequence is that of Oncosphere antigen A (ONCA) from Hydatigena taeniaeformis (Feline tapeworm).